Reading from the N-terminus, the 296-residue chain is Glycine--tRNA ligase alpha subunit (296 aa).

Belongs to the class-II aminoacyl-tRNA synthetase family. Tetramer of two alpha and two beta subunits.

Its subcellular location is the cytoplasm. It carries out the reaction tRNA(Gly) + glycine + ATP = glycyl-tRNA(Gly) + AMP + diphosphate. This chain is Glycine--tRNA ligase alpha subunit, found in Listeria monocytogenes serotype 4b (strain CLIP80459).